We begin with the raw amino-acid sequence, 946 residues long: MSVRLRFLSPGDTGAVGVVGRSASFAGFSSAQSRRIAKSINRNSVRSRMPAKSSKMYGTLRKGSVCADPKPQQVKKIFEALKRGLKEYLCVQQAELDHLSGRHKDTRRNSRLAFYYDLDKQTRCVERHIRKMEFHISKVDELYEDYCIQCRLRDGASSMQRAFARCPPSRAARESLQELGRSLHECAEDMWLIEGALEVHLGEFHIRMKGLVGYARLCPGDHYEVLMRLGRQRWKLKGRIESDDSQTWDEEEKAFIPTLHENLDIKVTELRGLGSLAVGAVTCDIADFFTTRPQVIVVDITELGTIKLQLEVQWNPFDTESFLVSPSPTGKFSMGSRKGSLYNWTPPSTPSFRERYYLSVLQQPTQQALLLGGPRATSILSYLSDSDLRGPSLRSQSQELPEMDSFSSEDPRDTETSTSASTSDVGFLPLTFGPHASIEEEAREDPLPPGLLPEMAHLSGGPFAEQPGWRNLGGESPSLPQGSLFHSGTASSSQNGHEEGATGDREDGPGVALEGPLQEVLELLRPTDSTQPQLRELEYQVLGFRDRLKPCRARQEHTSAESLMECILESFAFLNADFALDELSLFGGSQGLRKDRPLPPPSSLKASSRELTAGAPELDVLLMVHLQVCKALLQKLASPNLSRLVQECLLEEVAQQKHVLETLSVLDFEKVGKATSIEEIIPQASRTKGCLKLWRGCTGPGRVLSCPATTLLNQLKKTFQHRVRGKYPGQLEIACRRLLEQVVSCGGLLPGAGLPEEQIITWFQFHSYLQRQSVSDLEKHFTQLTKEVTLIEELHCAGQAKVVRKLQGKRLGQLQPLPQTLRAWALLQLDGTPRVCRAASARLAGAVRNRSFREKALLFYTNALAENDARLQQAACLALKHLKGIESIDQTASLCQSDLEAVRAAARETTLSFGEKGRLAFEKMDKLCSEQREVFCQEADVEITIF.

Residues S9, S24, and S340 each carry the phosphoserine modification. T345 is subject to Phosphothreonine. 2 positions are modified to phosphoserine: S351 and S384. Residues 390-512 form a disordered region; the sequence is GPSLRSQSQE…GDREDGPGVA (123 aa). Positions 437–446 are enriched in basic and acidic residues; sequence SIEEEAREDP. Polar residues predominate over residues 478–495; the sequence is SLPQGSLFHSGTASSSQN. The segment covering 496 to 508 has biased composition (basic and acidic residues); it reads GHEEGATGDREDG.

This sequence belongs to the RIPOR family.

The chain is RIPOR family member 3 from Homo sapiens (Human).